The sequence spans 569 residues: Phospholipase B-like protein D (569 aa).

Positions 1–22 are cleaved as a signal peptide; that stretch reads MIIFKNLLKLLIILLTIKLYFC. N93, N126, N181, N425, and N430 each carry an N-linked (GlcNAc...) asparagine glycan.

The protein belongs to the phospholipase B-like family.

Its subcellular location is the secreted. Functionally, probable phospholipase. The polypeptide is Phospholipase B-like protein D (plbD) (Dictyostelium discoideum (Social amoeba)).